A 510-amino-acid chain; its full sequence is MEFSPRAAELTTLLESRISNFYTNFQVDEIGRVVSVGDGIARVYGLNEIQAGEMVEFASGVKGIALNLENENVGIVVFGSDTAIKEGDLVKRTGSIVDVPAGKAMLGRVVDALGVPIDGRGALSDHERRRVEVKAPGIIERKSVHEPMQTGLKAVDSLVPIGRGQRELIIGDRQTGKTAIAIDTILNQKQMNSRSTSESETLYCVYVAIGQKRSTVAQLVQILSEANAMEYSILVAATASDPAPLQFLAPYSGCAMGEYFRDNGMHALIIYDDLSKQAVAYRQMSLLLRRPPGREAFPGDVFYLHSRLLERAAKRSDQTGAGSLTALPVIETQAGDVSAYIPTNVIPITDGQICSETELFYRGIRPAINVGLSVSRVGSAAQLKTMKQVCGSSKLELAQYREVAALAQFGSDLDAATQALLNRGARLTEVPKQPQYAPLPIEKQILVIYAAVNGFCDRMPLDRISQYERAILKSIKTELLQSLLEKGGLTNERKMEPDTFLKECALPYTI.

Residue 171 to 178 participates in ATP binding; the sequence is GDRQTGKT.

It belongs to the ATPase alpha/beta chains family. F-type ATPases have 2 components, CF(1) - the catalytic core - and CF(0) - the membrane proton channel. CF(1) has five subunits: alpha(3), beta(3), gamma(1), delta(1), epsilon(1). CF(0) has three main subunits: a, b and c.

It is found in the mitochondrion. The protein resides in the mitochondrion inner membrane. In terms of biological role, mitochondrial membrane ATP synthase (F(1)F(0) ATP synthase or Complex V) produces ATP from ADP in the presence of a proton gradient across the membrane which is generated by electron transport complexes of the respiratory chain. F-type ATPases consist of two structural domains, F(1) - containing the extramembraneous catalytic core, and F(0) - containing the membrane proton channel, linked together by a central stalk and a peripheral stalk. During catalysis, ATP synthesis in the catalytic domain of F(1) is coupled via a rotary mechanism of the central stalk subunits to proton translocation. Subunits alpha and beta form the catalytic core in F(1). Rotation of the central stalk against the surrounding alpha(3)beta(3) subunits leads to hydrolysis of ATP in three separate catalytic sites on the beta subunits. Subunit alpha does not bear the catalytic high-affinity ATP-binding sites. The polypeptide is ATP synthase subunit alpha, mitochondrial (ATPA) (Helianthus annuus (Common sunflower)).